We begin with the raw amino-acid sequence, 239 residues long: tRNA (guanine-N(1)-)-methyltransferase (239 aa).

S-adenosyl-L-methionine-binding positions include Gly113 and 133 to 138 (IGDYVL). A disordered region spans residues 218 to 239 (ERRPDLWAARATQNPPERKTNG).

Belongs to the RNA methyltransferase TrmD family. In terms of assembly, homodimer.

It localises to the cytoplasm. It catalyses the reaction guanosine(37) in tRNA + S-adenosyl-L-methionine = N(1)-methylguanosine(37) in tRNA + S-adenosyl-L-homocysteine + H(+). Specifically methylates guanosine-37 in various tRNAs. This chain is tRNA (guanine-N(1)-)-methyltransferase, found in Nitrobacter winogradskyi (strain ATCC 25391 / DSM 10237 / CIP 104748 / NCIMB 11846 / Nb-255).